A 165-amino-acid polypeptide reads, in one-letter code: UPF0114 protein ESA_00283 (165 aa).

3 consecutive transmembrane segments (helical) span residues 15–35 (LLAP…VKFF), 53–73 (LILL…LVMV), and 136–156 (LMWY…MGYL).

The protein belongs to the UPF0114 family.

It is found in the cell membrane. This Cronobacter sakazakii (strain ATCC BAA-894) (Enterobacter sakazakii) protein is UPF0114 protein ESA_00283.